The sequence spans 132 residues: Small ribosomal subunit protein uS8 (132 aa).

The protein belongs to the universal ribosomal protein uS8 family. Part of the 30S ribosomal subunit. Contacts proteins S5 and S12.

One of the primary rRNA binding proteins, it binds directly to 16S rRNA central domain where it helps coordinate assembly of the platform of the 30S subunit. The chain is Small ribosomal subunit protein uS8 from Sinorhizobium medicae (strain WSM419) (Ensifer medicae).